A 257-amino-acid polypeptide reads, in one-letter code: Baramicin A1 (257 aa).

Positions M1 to A19 are cleaved as a signal peptide. Residues E20 to P21 constitute a propeptide that is removed on maturation. Residue Q22 is modified to Pyrrolidone carboxylic acid. Residues G95–Q122 are disordered. A glycan (N-linked (GlcNAc...) asparagine) is linked at N97. Residues R118 to P121 constitute a propeptide that is removed on maturation. Pyrrolidone carboxylic acid is present on Q122. Positions R145–P148 are excised as a propeptide. The residue at position 149 (Q149) is a Pyrrolidone carboxylic acid. Positions R172–P175 are excised as a propeptide. Q176 is subject to Pyrrolidone carboxylic acid. The propeptide occupies R199–D204. N-linked (GlcNAc...) asparagine glycosylation occurs at N225.

Post-translationally, proteolytically cleaved. Hemolymph (at protein level).

The protein resides in the secreted. In terms of biological role, secreted immune-induced peptides induced by Toll signaling. Has a significant role in resistance to infection by the entomopathogenic fungus B.bassiana R444 and weak antifungal activity against M.rileyi PHP1705. In adult males, activity appears to be important for neuromuscular processes that mediate correct wing posture upon Toll activation. This chain is Baramicin A1, found in Drosophila melanogaster (Fruit fly).